The sequence spans 306 residues: Pantothenate kinase (306 aa).

91–98 (GSVAVGKS) contacts ATP.

This sequence belongs to the prokaryotic pantothenate kinase family.

It localises to the cytoplasm. The catalysed reaction is (R)-pantothenate + ATP = (R)-4'-phosphopantothenate + ADP + H(+). The protein operates within cofactor biosynthesis; coenzyme A biosynthesis; CoA from (R)-pantothenate: step 1/5. The sequence is that of Pantothenate kinase from Streptococcus pneumoniae (strain Hungary19A-6).